We begin with the raw amino-acid sequence, 249 residues long: MRILVSNDDGFHAEGIQVLATELRKIAEVIIVAPDRNRSAASSSLTLVEPLRPRHLDNGDYCVNGTPADCVHLALNGFLSGQVDLVVSGINAGCNMGDDTIYSGTLAAALEGRHLGLPAIAVSLDGRQHYETAARVVCDLIPKLHHQLLNLREIININVPDLPFEELKGYKVCRLGYRASSAEVIKQRDPRDETIYWIGPSALPEDESEGTDFYAVKNGYVSITPIQADLTAYHSLLSLQNWLDQEFTK.

A divalent metal cation-binding residues include Asp-8, Asp-9, Ser-39, and Asn-91.

This sequence belongs to the SurE nucleotidase family. It depends on a divalent metal cation as a cofactor.

Its subcellular location is the cytoplasm. The enzyme catalyses a ribonucleoside 5'-phosphate + H2O = a ribonucleoside + phosphate. Functionally, nucleotidase that shows phosphatase activity on nucleoside 5'-monophosphates. This is 5'-nucleotidase SurE from Haemophilus influenzae (strain PittEE).